Reading from the N-terminus, the 420-residue chain is Transcriptional adapter 2-beta (420 aa).

The segment at 4 to 59 adopts a ZZ-type zinc-finger fold; it reads LSKKYCVYCLADVTSLRLRCTECQDIELCTDCFSAGAEIGNHRRWHGYQLVDGGRF. 8 residues coordinate Zn(2+): Cys9, Cys12, Cys23, Cys26, Cys32, Cys35, His45, and His49. Residues 65–118 enclose the SANT domain; that stretch reads EAEGGWTSREEQLLLDAIEQFGFGNWEDMAAHVGASRTPTEVMEHYVTMYIHGN. Positions 303–333 are disordered; that stretch reads EESAEYEAARHKREKRKENKNIANSKRGRED.

Its subcellular location is the nucleus. In terms of biological role, transcriptional coactivator. This is Transcriptional adapter 2-beta (tada2b) from Xenopus laevis (African clawed frog).